We begin with the raw amino-acid sequence, 373 residues long: Probable pectin lyase C (373 aa).

The first 18 residues, 1–18, serve as a signal peptide directing secretion; the sequence is MKVPFLQLLCLNAALASA. 2 cysteine pairs are disulfide-bonded: C81–C100 and C90–C220. N123 is a glycosylation site (N-linked (GlcNAc...) asparagine). R250 is an active-site residue. C316 and C324 are disulfide-bonded.

This sequence belongs to the polysaccharide lyase 1 family.

It is found in the secreted. The catalysed reaction is Eliminative cleavage of (1-&gt;4)-alpha-D-galacturonan methyl ester to give oligosaccharides with 4-deoxy-6-O-methyl-alpha-D-galact-4-enuronosyl groups at their non-reducing ends.. Pectinolytic enzymes consist of four classes of enzymes: pectin lyase, polygalacturonase, pectin methylesterase and rhamnogalacturonase. Among pectinolytic enzymes, pectin lyase is the most important in depolymerization of pectin, since it cleaves internal glycosidic bonds of highly methylated pectins. This chain is Probable pectin lyase C (pelC), found in Aspergillus niger (strain ATCC MYA-4892 / CBS 513.88 / FGSC A1513).